An 842-amino-acid polypeptide reads, in one-letter code: MSTLQSLIIDGFHGNGFHMIEEYLQQKESHVPQKYNHLLLHHLDRLIKEELDKNEFQNCSLLLKCIQRFFRDDPDHEEPLLIQQGLIPKMVSWFEIITGLLITKVLASEALLTNALEDFLDTALIISRHSRKATVQMLDSFILRLGFLVAEDSVKPSIQQETLATLNCILNAAPQEERRKLSSAEGACCLMKELARTILTVGDYSQQVALSEALCRMSVGRQRNDLAMQWFENTALAEAFKKIKNREFETDCRQFLNFLNNRLGNQRRVYSFPCLAAFADGQEMRKPADEKLEEFWIDFNLGSQSVTFYIDNAESALWEPVKLLKEAMVKFIIIENDRIKMFIVYLKQPIVISKREAKKIEIHFDRQLGILQASIQALGEDKQAPSFQTSVLVKLFSGLEKEDGEIPGRCEREAEDAEESTLLPELVDAEADRCLITRCFNVQTVPGVSKGSLEITNTEERSLENSKQDEPEQVTSEYDYPLDMQEPSIQNQASDLNNIKEDSAFARDREQDRRMPFNDRNHDLLESNEDSSLSTNERSWTQNHKRKSLRTYSQRKKQRVSSLRILPLSPIRSGHAPEKDEAELVPLWKGISRRNDSTLLKISETKLRGSSVLLTSGASTQKIGLEKPERRGSEPSSSTKKTRVTDGLHWREPRSPHPSSGPSSLEYLEVEENIPEIVNRESFMGNSSFKHKLENLGHREIPDGSVAALKQSRLEDAPGSPVVTDTSTPSQEDMPGSVNGSAFKTAFENFTRDLKRKFELELKQREIPFSLEKAKEAPACLIRLWNQIHTCRLDTLERFHSSVLRELSGLEKNLQTLKCLEKDALASLLFVLSLGRERTFSR.

Disordered regions lie at residues 451-473 (GSLE…EPEQ), 505-560 (FARD…KQRV), 619-666 (STQK…SSLE), and 715-738 (EDAP…PGSV). Basic and acidic residues-rich tracts occupy residues 458–470 (TEER…KQDE) and 505–525 (FARD…HDLL). Positions 543–559 (NHKRKSLRTYSQRKKQR) are enriched in basic residues. 2 stretches are compositionally biased toward basic and acidic residues: residues 624-633 (GLEKPERRGS) and 643-655 (RVTD…EPRS).

It belongs to the SYCP2 family. In terms of tissue distribution, specifically expressed in oocytes.

Its subcellular location is the nucleus. The protein resides in the chromosome. It localises to the centromere. In terms of biological role, oocyte-specific protein that localizes to centromeres at the dictyate stage and regulates the survival of primordial oocytes. The polypeptide is Synaptonemal complex protein 2-like (Mus musculus (Mouse)).